A 167-amino-acid polypeptide reads, in one-letter code: Interferon gamma (167 aa).

The signal sequence occupies residues 1 to 23 (MNYTGYLLAFQLCIILGSSSCYC). The residue at position 24 (Gln-24) is a Pyrrolidone carboxylic acid. Asn-39 and Asn-105 each carry an N-linked (GlcNAc...) asparagine glycan. The interval 148–167 (SNLRKRKRSQSTFHGRRASI) is disordered. The segment covering 149–167 (NLRKRKRSQSTFHGRRASI) has biased composition (basic residues).

This sequence belongs to the type II (or gamma) interferon family. In terms of assembly, homodimer. Interacts with IFNGR1 (via extracellular domain); this interaction promotes IFNGR1 dimerization. As to expression, released primarily from activated T lymphocytes.

Its subcellular location is the secreted. In terms of biological role, type II interferon produced by immune cells such as T-cells and NK cells that plays crucial roles in antimicrobial, antiviral, and antitumor responses by activating effector immune cells and enhancing antigen presentation. Primarily signals through the JAK-STAT pathway after interaction with its receptor IFNGR1 to affect gene regulation. Upon IFNG binding, IFNGR1 intracellular domain opens out to allow association of downstream signaling components JAK2, JAK1 and STAT1, leading to STAT1 activation, nuclear translocation and transcription of IFNG-regulated genes. Many of the induced genes are transcription factors such as IRF1 that are able to further drive regulation of a next wave of transcription. Plays a role in class I antigen presentation pathway by inducing a replacement of catalytic proteasome subunits with immunoproteasome subunits. In turn, increases the quantity, quality, and repertoire of peptides for class I MHC loading. Increases the efficiency of peptide generation also by inducing the expression of activator PA28 that associates with the proteasome and alters its proteolytic cleavage preference. Up-regulates as well MHC II complexes on the cell surface by promoting expression of several key molecules such as cathepsins B/CTSB, H/CTSH, and L/CTSL. Participates in the regulation of hematopoietic stem cells during development and under homeostatic conditions by affecting their development, quiescence, and differentiation. This is Interferon gamma (IFNG) from Dasypus novemcinctus (Nine-banded armadillo).